Consider the following 407-residue polypeptide: Ornithine cyclodeaminase (407 aa).

10 residues coordinate NAD(+): N233, A234, D312, T344, M345, L346, H347, D365, D388, and V389.

The protein belongs to the AgrE/ArgZ ornithine cyclodeaminase family. It depends on NAD(+) as a cofactor.

The enzyme catalyses L-ornithine = L-proline + NH4(+). Catalyzes the conversion of ornithine to proline, with the release of ammonia. The polypeptide is Ornithine cyclodeaminase (Archaeoglobus fulgidus (strain ATCC 49558 / DSM 4304 / JCM 9628 / NBRC 100126 / VC-16)).